Here is a 236-residue protein sequence, read N- to C-terminus: Sugar fermentation stimulation protein homolog (236 aa).

It belongs to the SfsA family.

The chain is Sugar fermentation stimulation protein homolog from Gloeobacter violaceus (strain ATCC 29082 / PCC 7421).